A 505-amino-acid chain; its full sequence is Deoxyguanosinetriphosphate triphosphohydrolase (505 aa).

Positions 66-273 (RLTHSMEVQQ…MEAADDISYC (208 aa)) constitute an HD domain.

This sequence belongs to the dGTPase family. Type 1 subfamily. In terms of assembly, homotetramer. Mg(2+) serves as cofactor.

It carries out the reaction dGTP + H2O = 2'-deoxyguanosine + triphosphate + H(+). In terms of biological role, dGTPase preferentially hydrolyzes dGTP over the other canonical NTPs. The protein is Deoxyguanosinetriphosphate triphosphohydrolase of Salmonella schwarzengrund (strain CVM19633).